A 124-amino-acid polypeptide reads, in one-letter code: Acidic phospholipase A2 (124 aa).

Cystine bridges form between C26/C117, C28/C44, C43/C97, C49/C124, C50/C90, C57/C83, and C77/C88. 3 residues coordinate Ca(2+): Y27, G29, and G31. The active site involves H47. D48 is a binding site for Ca(2+). Residue E89 is part of the active site.

This sequence belongs to the phospholipase A2 family. Group II subfamily. D49 sub-subfamily. Ca(2+) is required as a cofactor. As to expression, expressed by the venom gland.

The protein resides in the secreted. It catalyses the reaction a 1,2-diacyl-sn-glycero-3-phosphocholine + H2O = a 1-acyl-sn-glycero-3-phosphocholine + a fatty acid + H(+). Its function is as follows. Snake venom phospholipase A2 (PLA2) that inhibits collagen- and ADP-induced platelet aggregation. PLA2 catalyzes the calcium-dependent hydrolysis of the 2-acyl groups in 3-sn-phosphoglycerides. This Bothrops jararaca (Jararaca) protein is Acidic phospholipase A2.